Here is a 68-residue protein sequence, read N- to C-terminus: Large ribosomal subunit protein bL32 (68 aa).

This sequence belongs to the bacterial ribosomal protein bL32 family.

This chain is Large ribosomal subunit protein bL32, found in Cereibacter sphaeroides (strain ATCC 17025 / ATH 2.4.3) (Rhodobacter sphaeroides).